Here is a 971-residue protein sequence, read N- to C-terminus: U2 snRNP component HSH155 (971 aa).

2 disordered regions span residues 1-22 and 54-118; these read MSHPIQFVNANNSDKSHQLGGQ and TRTV…AVKE. Polar residues predominate over residues 8–22; the sequence is VNANNSDKSHQLGGQ. A compositionally biased stretch (basic and acidic residues) spans 54–75; it reads TRTVQNREDSYHKRRFDMKFEP. Residues 78 to 90 are compositionally biased toward polar residues; it reads DTQTVTSSENTQD. 9 HEAT repeats span residues 199–237, 273–310, 350–387, 513–550, 596–633, 680–717, 722–759, 792–829, and 832–870; these read MIFNRLLPILLDRSLEDQERHLMIKTIDRVLYQLGDLTK, AGLKTILTVMRPDIENEDEYVRNVTSRAAAVVAKALGV, NHLTGLMSCIKDCLMDDHVPVRIVTAHTLSTLAENSYP, LGCSYTIDKLLTPLRDEAEPFRTMAVHAVTRTVNLLGT, PFLAPIVSTILNHLKHKTPLVRQHAADLCAILIPVIKN, PPINQILPTLTPILRNKHRKVEVNTIKFVGLIGKLAPT, KEWMRICFELLELLKSTNKEIRRSANATFGFIAEAIGP, CGPYNVLPVIMNEYTTPETNVQNGVLKAMSFMFEYIGN, and KDYIYFITPLLEDALTDRDLVHRQTASNVITHLALNCSG.

Belongs to the SF3B1 family. Belongs to the CWC complex (or CEF1-associated complex), a spliceosome sub-complex reminiscent of a late-stage spliceosome composed of the U2, U5 and U6 snRNAs and at least BUD13, BUD31, BRR2, CDC40, CEF1, CLF1, CUS1, CWC2, CWC15, CWC21, CWC22, CWC23, CWC24, CWC25, CWC27, ECM2, HSH155, IST3, ISY1, LEA1, MSL1, NTC20, PRP8, PRP9, PRP11, PRP19, PRP21, PRP22, PRP45, PRP46, SLU7, SMB1, SMD1, SMD2, SMD3, SMX2, SMX3, SNT309, SNU114, SPP2, SYF1, SYF2, RSE1 and YJU2. Interacts with RDS3.

The protein resides in the nucleus. Contacts pre-mRNA on both sides of the branch site early in spliceosome assembly. The polypeptide is U2 snRNP component HSH155 (HSH155) (Saccharomyces cerevisiae (strain ATCC 204508 / S288c) (Baker's yeast)).